A 123-amino-acid polypeptide reads, in one-letter code: Ferredoxin-5 (123 aa).

Positions 2-119 constitute a 2Fe-2S ferredoxin-type domain; that stretch reads PNITFTSPIM…DVMVHFTGTP (118 aa). Cys-42, Cys-47, Cys-50, and Cys-102 together coordinate [2Fe-2S] cluster.

It belongs to the 2Fe2S plant-type ferredoxin family. [2Fe-2S] cluster serves as cofactor.

Its function is as follows. Ferredoxins are iron-sulfur proteins that transfer electrons in a wide variety of metabolic reactions. This ferredoxin probably participates in nitrogen fixation. The protein is Ferredoxin-5 (fdxD) of Rhodobacter capsulatus (Rhodopseudomonas capsulata).